The chain runs to 282 residues: Protoheme IX farnesyltransferase (282 aa).

9 consecutive transmembrane segments (helical) span residues 9–29, 39–59, 79–99, 102–122, 139–159, 165–185, 210–230, 231–251, and 261–281; these read LAKP…FLLA, LPLF…GCVF, LVTG…LLIL, LVLY…GFIV, VLGG…VVNI, LALF…IAML, IMLF…VLGS, ADLF…YKSI, and VFAK…CLTM.

The protein belongs to the UbiA prenyltransferase family. Protoheme IX farnesyltransferase subfamily.

It localises to the cell inner membrane. It catalyses the reaction heme b + (2E,6E)-farnesyl diphosphate + H2O = Fe(II)-heme o + diphosphate. Its pathway is porphyrin-containing compound metabolism; heme O biosynthesis; heme O from protoheme: step 1/1. Functionally, converts heme B (protoheme IX) to heme O by substitution of the vinyl group on carbon 2 of heme B porphyrin ring with a hydroxyethyl farnesyl side group. In Francisella tularensis subsp. holarctica (strain LVS), this protein is Protoheme IX farnesyltransferase.